The primary structure comprises 506 residues: Methylthioalkylmalate synthase 1, chloroplastic (506 aa).

Residues 1 to 49 constitute a chloroplast transit peptide; sequence MASSLLTSSVMIPTTGSTVVGRSVLPFQSSLHSLRLTHSYKNPALFISC. The Pyruvate carboxyltransferase domain maps to 85-359; sequence VRVFDTTLRD…YTKIDTRQIM (275 aa). Phosphoserine is present on Ser-98.

It belongs to the alpha-IPM synthase/homocitrate synthase family. In terms of assembly, monomer. Mn(2+) is required as a cofactor. In terms of tissue distribution, highly expressed in leaves, flowers, roots and siliques. Not detected in flowers in PubMed:12432038.

It localises to the plastid. The protein localises to the chloroplast. It carries out the reaction an omega-(methylsulfanyl)-2-oxoalkanoate + acetyl-CoA + H2O = a 2-(omega-methylsulfanyl)alkylmalate + CoA + H(+). Its activity is regulated as follows. 1 mM DTT required for activity. Activated by ATP and inhibited by iodoacetamide. Determines the side chain length of aliphatic glucosinolate structures. Catalyzes exclusively the condensation reactions of both the first and second methionine carbon chain elongation. The sequence is that of Methylthioalkylmalate synthase 1, chloroplastic (MAM1) from Arabidopsis thaliana (Mouse-ear cress).